Consider the following 1099-residue polypeptide: MGSSIFLGLQPSPSHWLKSSVVIHEDAPTMFYGTQLIMSPPTKNKLKRQSQLLSTMLSRTLSYKYRDLDSTFCSLGASDDPSELSTQLSAPGVLKVFGDSVCTGTHYKSVLATGSSSAQELVKEALERYALDPECAGQYVLCDVVGQAGDSGQRWQAQCFRVFGDNEKPLLIQELWKPREGLSRRFELRKKSDVEELASRDVDTTTAGINAQARRLQRIRAKGTPALTSEAAQSSPPTRLRRTVSETSLSPAPSLPEAAQRPEEPVPEAMRYSLYQCPHLLLLQGYSQQHDSLVYVLSKERHTVGQRTPSSKPSISLSAPDILPLHCTIRRHQSPEGGPAGTRLVLEPITGASVSVNFSEVGRNPVVLQHGDLLSLGLYYLLLFKDPGQAQPLPACALARLGAAPQSCRMCGAVLRARGAPSLPAAVVRRRSLLLEFEPDVEDTLLQRIMTLIEPGGDDHKLTPAFLLCLCIQHSAMHFQPGTFRHLLLKISKRVRDTVWEKTKELAEKQAQLQEPISWASFPMADLVPDLQHILFWMSNSIELLYFIQQKSPLYVQSMEEELDVTGSKESLFSCTLTASEEAMAALEEVVLYAFQQCVYYLSKCLYVCLPALLECPPFQTERRESWRSGPALPEELRRVVSVFQATLDLLQQLQMHPEVASQMLAYLFFFSGTLLLNQVLDKGPSLSCFHWPRGVQVCARLQQFLEWARSAGLGAPAERFFRKLSCTLHLLATPRAQLIQMSWATLRVTFPALNPAQLHRLLTQYQLASAMGPVSAWEPGAPDGPEAFQSEDILESYENPPPIVLPSQGFQVDLEADCVEDSIYQHLLYIRHFLWGLRGQASPDSGPAQPESIEGLYHTIPEGHLEGHGCPLANRDPGRVAVETAPPHSLPVTGAPRAQGPPGRQPTRGDRRGSQAGSLHTDSSCMLTPPSTPLGLEPAGPSWPEPSGLCGRAVLDGQRNGPGGLPGAVLEGDAIQDAEPPAEASSPSSSAEDFCYVFMVELERGPSGLGMGLIDGMHTPLGAQGLYIQTLLPGSPAASDGRLSLGDQILEVNGSSLRGVSYMRAVDLIRHGGKKMRFLVAKSDMETAKKIRFRNPPS.

Residues 90–193 enclose the Ras-associating domain; sequence APGVLKVFGD…RRFELRKKSD (104 aa). The interval 221-265 is disordered; that stretch reads AKGTPALTSEAAQSSPPTRLRRTVSETSLSPAPSLPEAAQRPEEP. The span at 226 to 237 shows a compositional bias: polar residues; sequence ALTSEAAQSSPP. A phosphoserine mark is found at Ser235, Ser245, Ser248, and Ser250. Residues 302–377 form the FHA domain; the sequence is HTVGQRTPSS…LQHGDLLSLG (76 aa). Ser422 and Ser432 each carry phosphoserine. Residues 525-792 enclose the Dilute domain; it reads ADLVPDLQHI…PDGPEAFQSE (268 aa). The tract at residues 868–941 is disordered; sequence GHGCPLANRD…STPLGLEPAG (74 aa). Position 915 is a phosphoserine (Ser915). Residues 916–927 show a composition bias toward polar residues; it reads QAGSLHTDSSCM. Residues 1000-1085 enclose the PDZ domain; that stretch reads MVELERGPSG…KMRFLVAKSD (86 aa).

It belongs to the RADIL family. Interacts with RAP1A; in a GTP-dependent manner. Does not interact with members of the Ras family. Interacts (via PDZ domain) with KIF14; is recruited to the microtubule network restricting its interaction with activated RAP1A.

Downstream effector of Rap required for cell adhesion and migration of neural crest precursors during development. The protein is Ras-associating and dilute domain-containing protein (Radil) of Mus musculus (Mouse).